Reading from the N-terminus, the 283-residue chain is Phosphate import ATP-binding protein PstB 2 (283 aa).

An ABC transporter domain is found at 36 to 278 (LQVKQFNFYY…PKKKQTEDYI (243 aa)). Residue 69–76 (GPSGCGKS) coordinates ATP.

It belongs to the ABC transporter superfamily. Phosphate importer (TC 3.A.1.7) family. The complex is composed of two ATP-binding proteins (PstB), two transmembrane proteins (PstC and PstA) and a solute-binding protein (PstS).

It localises to the cell inner membrane. The enzyme catalyses phosphate(out) + ATP + H2O = ADP + 2 phosphate(in) + H(+). Its function is as follows. Part of the ABC transporter complex PstSACB involved in phosphate import. Responsible for energy coupling to the transport system. In Nitrosococcus oceani (strain ATCC 19707 / BCRC 17464 / JCM 30415 / NCIMB 11848 / C-107), this protein is Phosphate import ATP-binding protein PstB 2.